A 362-amino-acid polypeptide reads, in one-letter code: Aminomethyltransferase (362 aa).

This sequence belongs to the GcvT family. As to quaternary structure, the glycine cleavage system is composed of four proteins: P, T, L and H.

It catalyses the reaction N(6)-[(R)-S(8)-aminomethyldihydrolipoyl]-L-lysyl-[protein] + (6S)-5,6,7,8-tetrahydrofolate = N(6)-[(R)-dihydrolipoyl]-L-lysyl-[protein] + (6R)-5,10-methylene-5,6,7,8-tetrahydrofolate + NH4(+). The glycine cleavage system catalyzes the degradation of glycine. This Bacillus subtilis (strain 168) protein is Aminomethyltransferase.